We begin with the raw amino-acid sequence, 470 residues long: Nuclear receptor subfamily 0 group B member 1 (470 aa).

3 repeat units span residues Met-1–Cys-67, Phe-68–Cys-133, and Phe-134–Cys-200. The tract at residues Met-1–Val-253 is 4 X 67 AA tandem repeats. Short sequence motifs (LXXLL motif) lie at residues Leu-13–Leu-17, Leu-80–Leu-84, and Leu-146–Leu-150. The 4; truncated repeat unit spans residues Phe-201–Val-253. The region spanning Cys-215–Lys-469 is the NR LBD domain. The AF-2 motif motif lies at Met-461 to Leu-466.

The protein belongs to the nuclear hormone receptor family. NR0 subfamily. Homodimer. Interacts with NR5A1, NR5A2, NR0B2 and with COPS2. Interacts with ESRRB; represses ESRRB activity at the GATA6 promoter.

The protein localises to the nucleus. The protein resides in the cytoplasm. Nuclear receptor that lacks a DNA-binding domain and acts as a corepressor that inhibits the transcriptional activity of other nuclear receptors through heterodimeric interactions. Component of a cascade required for the development of the hypothalamic-pituitary-adrenal-gonadal axis. May also have a role in the development of the embryo and in the maintenance of embryonic stem cell pluripotency. This is Nuclear receptor subfamily 0 group B member 1 (NR0B1) from Pongo pygmaeus (Bornean orangutan).